Consider the following 609-residue polypeptide: NURS complex subunit pir2 (609 aa).

Over residues 1-25 (MSEVHQESEVEYSRWKRERSPERSQ) the composition is skewed to basic and acidic residues. 2 disordered regions span residues 1 to 60 (MSEV…RASG) and 187 to 210 (EKPSIPDNDTDDSILPSNDPQLSK). Over residues 27 to 36 (RSQSPPGEQS) the composition is skewed to low complexity. Residues serine 28 and serine 30 each carry the phosphoserine modification. Over residues 37–57 (AYHRERSPLRKRGNYYDDRTR) the composition is skewed to basic and acidic residues. Positions 201 to 210 (LPSNDPQLSK) are enriched in polar residues. Residues 474-499 (YRCHVGTCAKLFLGPEFVRKHINKKH) form a C2H2-type zinc finger.

It belongs to the ARS2 family. In terms of assembly, interacts with ccr4.

It is found in the nucleus. The chain is NURS complex subunit pir2 from Schizosaccharomyces pombe (strain 972 / ATCC 24843) (Fission yeast).